A 941-amino-acid polypeptide reads, in one-letter code: Zinc finger protein su(Hw) (941 aa).

Disordered regions lie at residues 1–97 (MSAS…APAA) and 176–211 (ENNNGQEIVVTEDDEDLGEDGDEDGEDSSGKGNSSQ). The span at 47–57 (STTTTTSRTPS) shows a compositional bias: low complexity. Acidic residues predominate over residues 185-202 (VTEDDEDLGEDGDEDGED). Residue T186 is modified to Phosphothreonine. The segment at 220-242 (HVCGKCYKTFRRVQSLKKHLEFC) adopts a C2H2-type 1; atypical zinc-finger fold. Residues 290-313 (INCPDCPKSFKTQTSYERHIFITH) form a C2H2-type 2 zinc finger. A C2H2-type 3; atypical zinc finger spans residues 319-341 (FPCSICNANLRSEALLALHEEQH). C2H2-type zinc fingers lie at residues 348–366 (YACKICGKDFTRSYHLKRH), 380–402 (MSCKVCDRVFYRLDNLRSHLKQH), 413–435 (YMCHTCKNCFYSLSTLNIHIRTH), 441–463 (FDCDLCDKKFSALVALKKHRRYH), 469–491 (YSCTVCNQAFAVKEVLNRHMKRH), 497–519 (HKCDECGKSFIQATQLRTHSKTH), 523–545 (FPCEQCDEKFKTEKQLERHVKTH), 553–577 (FSCAECKRNFRTPALLKEHMDEGKH), and 596–619 (TDCAICDKNFDSSDTLRRHIRTVH). The interaction with mod(mdg4) stretch occupies residues 760–860 (ILTEEDIKLK…PIDDVIEYVL (101 aa)). The segment at 864–941 (DQDEGGLDKD…KKPVGEQEKA (78 aa)) is disordered. 2 stretches are compositionally biased toward basic and acidic residues: residues 869-880 (GLDKDNESHSGD) and 891-941 (KTNE…QEKA).

Component of the gypsy chromatin insulator complex, composed of Cp190, mod(mdg4) and su(Hw). The gypsy chromatin insulator complex interacts with Topors via mod(mdg4) and su(Hw). Upon ecdysone stimulation, interacts with Nup98.

It is found in the nucleus. It localises to the chromosome. Component of the gypsy chromatin insulator complex which is required for the function of the gypsy chromatin insulator and other endogenous chromatin insulators. Chromatin insulators are regulatory elements which establish independent domains of transcriptional activity within eukaryotic genomes. Insulators have two defining properties; they can block the communication between an enhancer and a promoter when placed between them and can also buffer transgenes from position effect variegation (PEV). Insulators are proposed to structure the chromatin fiber into independent domains of differing transcriptional potential by promoting the formation of distinct chromatin loops. This chromatin looping may involve the formation of insulator bodies, where homotypic interactions between individual subunits of the insulator complex could promote the clustering of widely spaced insulators at the nuclear periphery. Within the gypsy insulator complex, this protein binds specifically to a region of the gypsy element located 3' of the 5' long terminal repeat (LTR), and may also mediate interaction with other endogenous insulators at sites distinct from those recognized by Cp190. Cooperates with pita and cliff to recruit Cp190 and regulate insulator function at the front-ultraabdominal (Fub) boundary. The polypeptide is Zinc finger protein su(Hw) (Drosophila melanogaster (Fruit fly)).